The sequence spans 1147 residues: Protein lin-41 (1147 aa).

Positions 1-93 are disordered; that stretch reads MATIVPCSLE…PPSMIQSPQQ (93 aa). Residues 33-47 are compositionally biased toward low complexity; the sequence is SGNELSMGGSSSEGD. Residues 48 to 65 are compositionally biased toward basic and acidic residues; the sequence is SMSHHRGEHSPNHHHQDN. The span at 84–93 shows a compositional bias: low complexity; the sequence is PPSMIQSPQQ. The segment at 114-155 adopts an RING-type zinc-finger fold; that stretch reads CSVCSKSSTIGVLPFVCAHKTCQSCYQMTPSSYDRRACKLCG. The B box-type; atypical zinc-finger motif lies at 366 to 412; sequence MGPIQCQGCESKISFAYCMQCQEALCIHCVQAHQRVRATKQHAFVEL. Residues cysteine 371, cysteine 374, cysteine 394, and histidine 398 each contribute to the Zn(2+) site. Residues 565–618 are a coiled coil; the sequence is AFDTHVNALEERRKELLKRVETVKNLKLSVLISQAESLQSKQIDLQQAIQTATK. The Filamin repeat unit spans residues 723 to 817; sequence ACGDLLSSSI…ISGCPTTMDI (95 aa). NHL repeat units lie at residues 832–875, 879–922, 926–969, 974–1017, 1022–1065, and 1107–1147; these read ILTF…FDKD, ISKF…FDEN, LLKF…FTPQ, RKCG…LSPR, MKVY…FASD, and SAPT…IRVF. The interval 1104–1123 is disordered; that stretch reads AFSSAPTPLTPSPRQLLDRP.

Belongs to the TRIM/RBCC family.

The protein localises to the cytoplasm. It localises to the P-body. In terms of biological role, heterochronic protein which acts downstream of let-7 in temporal patterning. Plays a role in the developmental timing of postembryonic hypodermal seam cell division and fusion events and adult alae production. Represses lin-29 during late larval stages, which prevents terminal differentiation of hypodermal seam cells and promotes their division. Involved in post-transcriptional gene regulation, uses two independent pathways. Has direct and specific RNA-binding activity and, depending on the location (5'UTR or 3'UTR) of the target site, triggers either mRNA decay or repression of translation. Degrades the mRNA of transcription factor dmd-3 to govern the timing and extent of male tail tip morphogenesis. Plays a role in the sexual maturation of the nervous system. This chain is Protein lin-41, found in Caenorhabditis elegans.